Consider the following 709-residue polypeptide: Tyrosine-protein phosphatase cdc-14 (709 aa).

Residues 196–354 enclose the Tyrosine-protein phosphatase domain; the sequence is DFNWIIPGKI…QKFCWSLSQS (159 aa). Catalysis depends on cysteine 295, which acts as the Phosphocysteine intermediate. Residues 366–371 carry the Nuclear localization signal motif; sequence KRNVRR. The short motif at 372–381 is the Nuclear export signal element; that stretch reads LVNQVDDINL. Disordered regions lie at residues 403 to 541, 573 to 594, and 628 to 661; these read VQVQ…LTRT, RYLSPTTPIKPMSPSYTDGTSP, and ESKPPKRILSMPGTSKSTSSLKKIQVSRPRPYPS. Over residues 404-413 the composition is skewed to polar residues; it reads QVQNGRSTAP. Low complexity predominate over residues 463 to 479; that stretch reads TTSPNSSSSRRFVKSST. Polar residues-rich tracts occupy residues 480–490 and 501–521; these read PQMTVPSQAYL and PSKNGTSSGTSSRQLKTTPNG. The segment covering 526-541 has biased composition (low complexity); the sequence is RTRNSSGNTTSTLTRT. Residues 639 to 649 show a composition bias toward polar residues; it reads PGTSKSTSSLK.

Belongs to the protein-tyrosine phosphatase family. Non-receptor class CDC14 subfamily.

The protein resides in the cytoplasm. It is found in the cytoskeleton. Its subcellular location is the microtubule organizing center. It localises to the centrosome. The protein localises to the spindle. The protein resides in the midbody. It is found in the nucleus. It carries out the reaction O-phospho-L-tyrosyl-[protein] + H2O = L-tyrosyl-[protein] + phosphate. Inhibited by sodium orthovanadate. Weakly inhibited by sodium fluoride and okadaic acid. Its function is as follows. Protein phosphatase that negatively regulates the G1-to-S phase transition to inhibit the cell cycle and establish quiescence in cells of multiple lineages including vulval, hypodermal and intestinal. Promotes nuclear accumulation and activity of the cyclin-dependent kinase inhibitor cki-1 which leads to inhibition of G1 progression during vulval tissue development. Has been shown to not be required for cytokinesis. However, in the embryo, in a contrasting study, has been shown to act as a regulator of central spindle formation and cytokinesis, and may be required for localization of the spindle component zen-4, and its interacting partner air-2 at the spindle during late cell divisions. In terms of biological role, main regulator of cell cycle arrest in vulval precursor cells. In Caenorhabditis elegans, this protein is Tyrosine-protein phosphatase cdc-14.